The following is a 505-amino-acid chain: RNA-splicing ligase RtcB homolog (505 aa).

Residues Asp119, Cys122, His227, His259, and His353 each contribute to the Mn(2+) site. Asn226–Glu230 lines the GMP pocket. Residues His353–Asn354, Gly402–Met405, Ser409, His428–Gly431, and Lys504 each bind GMP. Residue His428 is the GMP-histidine intermediate of the active site.

Belongs to the RtcB family. As to quaternary structure, catalytic component of the tRNA-splicing ligase complex. Requires Mn(2+) as cofactor.

It carries out the reaction a 3'-end 3'-phospho-ribonucleotide-RNA + a 5'-end dephospho-ribonucleoside-RNA + GTP = a ribonucleotidyl-ribonucleotide-RNA + GMP + diphosphate. The catalysed reaction is a 3'-end 2',3'-cyclophospho-ribonucleotide-RNA + a 5'-end dephospho-ribonucleoside-RNA + GTP + H2O = a ribonucleotidyl-ribonucleotide-RNA + GMP + diphosphate + H(+). In terms of biological role, catalytic subunit of the tRNA-splicing ligase complex that acts by directly joining spliced tRNA halves to mature-sized tRNAs by incorporating the precursor-derived splice junction phosphate into the mature tRNA as a canonical 3',5'-phosphodiester. May act as an RNA ligase with broad substrate specificity, and may function toward other RNAs. This is RNA-splicing ligase RtcB homolog from Nematostella vectensis (Starlet sea anemone).